The sequence spans 165 residues: MTLEEFSAGEQKTERMDKVGDALEEVLSKALSQRTITVGVYEAAKLLNVDPDNVVLCLLAADEDDDRDVALQIHFTLIQAFCCENDIDILRVSNPGRLAELLLLETDAGPAASEGAEQPPDLHCVLVTNPHSSQWKDPALSQLICFCRESRYMDQWVPVINLPER.

Phosphothreonine is present on T2.

This sequence belongs to the GADD45 family. As to quaternary structure, interacts with AURKA, PCNA, GADD45GIP1 and MAPK14.

Its subcellular location is the nucleus. Might affect PCNA interaction with some CDK (cell division protein kinase) complexes; stimulates DNA excision repair in vitro and inhibits entry of cells into S phase. In T-cells, functions as a regulator of p38 MAPKs by inhibiting p88 phosphorylation and activity. The protein is Growth arrest and DNA damage-inducible protein GADD45 alpha (GADD45A) of Bos taurus (Bovine).